The sequence spans 397 residues: N-acetyllactosaminide beta-1,3-N-acetylglucosaminyltransferase 2 (397 aa).

Over Met1–Arg7 the chain is Cytoplasmic. A helical; Signal-anchor for type II membrane protein membrane pass occupies residues Val8 to Ser28. At Lys29–Arg325 the chain is on the lumenal side. Residues Asn30, Asn79, Asn89, Asn127, Asn173, and Asn219 are each glycosylated (N-linked (GlcNAc...) asparagine).

It belongs to the glycosyltransferase 31 family. In terms of assembly, interacts with B3GNT8; this interaction greatly increases B3GNT2 catalytic activity, independently of B3GNT8 enzymatic activity. It depends on Mn(2+) as a cofactor. In terms of tissue distribution, expressed in heart, brain, lung, kidney and testis and, to a lesser extent, in liver and skeletal muscle. No expression in spleen.

It is found in the golgi apparatus membrane. The enzyme catalyses a beta-D-galactosyl-(1-&gt;4)-N-acetyl-beta-D-glucosaminyl derivative + UDP-N-acetyl-alpha-D-glucosamine = an N-acetyl-beta-D-glucosaminyl-(1-&gt;3)-beta-D-galactosyl-(1-&gt;4)-N-acetyl-beta-D-glucosaminyl derivative + UDP + H(+). It functions in the pathway protein modification; protein glycosylation. Its function is as follows. Beta-1,3-N-acetylglucosaminyltransferase involved in the synthesis of poly-N-acetyllactosamine. Catalyzes the initiation and elongation of poly-N-acetyllactosamine chains. Probably constitutes the main polylactosamine synthase. This Mus musculus (Mouse) protein is N-acetyllactosaminide beta-1,3-N-acetylglucosaminyltransferase 2 (B3GNT2).